We begin with the raw amino-acid sequence, 399 residues long: Tyrosine--tRNA ligase (399 aa).

Residues 44–53 (PTAPDLHLGH) carry the 'HIGH' region motif. The 'KMSKS' region signature appears at 229–233 (KMSKS). Lysine 232 lines the ATP pocket. An S4 RNA-binding domain is found at 338–398 (ISITKALVDC…GKRKFAKLKV (61 aa)).

The protein belongs to the class-I aminoacyl-tRNA synthetase family. TyrS type 2 subfamily. As to quaternary structure, homodimer.

It is found in the cytoplasm. The enzyme catalyses tRNA(Tyr) + L-tyrosine + ATP = L-tyrosyl-tRNA(Tyr) + AMP + diphosphate + H(+). Functionally, catalyzes the attachment of tyrosine to tRNA(Tyr) in a two-step reaction: tyrosine is first activated by ATP to form Tyr-AMP and then transferred to the acceptor end of tRNA(Tyr). This chain is Tyrosine--tRNA ligase, found in Sulfurimonas denitrificans (strain ATCC 33889 / DSM 1251) (Thiomicrospira denitrificans (strain ATCC 33889 / DSM 1251)).